The sequence spans 233 residues: Defense protein 3 (233 aa).

The first 17 residues, 1–17 (MFGKFVLLAVLLVGVNS), serve as a signal peptide directing secretion. A propeptide spanning residues 18 to 45 (RYVIIEDPVYYIEDHELPEQWTSSRVRR) is cleaved from the precursor.

Belongs to the attacin/sarcotoxin-2 family.

Its subcellular location is the secreted. In terms of biological role, has antibacterial activity against both Gram-positive and Gram-negative bacteria. This Lonomia obliqua (Moth) protein is Defense protein 3.